A 317-amino-acid chain; its full sequence is Putative HTH-type transcriptional regulatory protein NP_1320A (317 aa).

In terms of domain architecture, HTH cro/C1-type spans 132-189; that stretch reads LSDIRSQEDMSLGKLANELGVSRRTVSKYEDGMSASVEVAAELEEIFDRKLASPVEVL. Positions 143–162 form a DNA-binding region, H-T-H motif; it reads LGKLANELGVSRRTVSKYED.

The sequence is that of Putative HTH-type transcriptional regulatory protein NP_1320A from Natronomonas pharaonis (strain ATCC 35678 / DSM 2160 / CIP 103997 / JCM 8858 / NBRC 14720 / NCIMB 2260 / Gabara) (Halobacterium pharaonis).